Reading from the N-terminus, the 199-residue chain is Thymidylate kinase (199 aa).

Residue 7–14 participates in ATP binding; it reads GTEGVGKT.

Belongs to the thymidylate kinase family.

The enzyme catalyses dTMP + ATP = dTDP + ADP. In terms of biological role, phosphorylation of dTMP to form dTDP in both de novo and salvage pathways of dTTP synthesis. This is Thymidylate kinase from Acinetobacter baumannii (strain ATCC 17978 / DSM 105126 / CIP 53.77 / LMG 1025 / NCDC KC755 / 5377).